We begin with the raw amino-acid sequence, 1094 residues long: Formin-like protein 1 (1094 aa).

3 disordered regions span residues 1 to 29, 173 to 199, and 507 to 627; these read MGNA…KQPM, SGAE…VPKS, and AATP…GVKA. Residue Gly-2 is the site of N-myristoyl glycine attachment. Residue Ser-7 is modified to Phosphoserine. Positions 16–28 are enriched in pro residues; the sequence is ASPPKQPAVPKQP. In terms of domain architecture, GBD/FH3 spans 27-464; it reads QPMPAAGELE…SRRIPEPEKV (438 aa). A Phosphoserine modification is found at Ser-184. Residues 519–529 are compositionally biased toward polar residues; the sequence is RVSTDSPSTAE. Pro residues-rich tracts occupy residues 535–549 and 559–610; these read ASPP…PPLP and PSAP…PGGP. One can recognise an FH2 domain in the interval 627 to 1018; the sequence is AKKPIQTKFR…DTSGREEPPT (392 aa). Phosphoserine is present on Ser-688. The segment covering 1002–1017 has biased composition (basic and acidic residues); the sequence is WKKEAAADTSGREEPP. The tract at residues 1002–1094 is disordered; the sequence is WKKEAAADTS…PLPVTTDLAL (93 aa). Ser-1021 is modified (phosphoserine). Positions 1049 to 1082 constitute a DAD domain; the sequence is SDRDGAIEDIITDLRNQPYIRADTGRRSARRRPP.

It belongs to the formin homology family. In terms of assembly, interacts with RAC1, PFN1 and PFN2. Interacts (activated by RAC1) with SRGAP2 (via SH3 domain); regulates the actin filament severing activity of FMNL1. Post-translationally, myristoylation mediates membrane localization. Highly expressed in the spleen, lymph node and bone marrow cells.

It localises to the cytoplasm. It is found in the cell membrane. The protein localises to the cytoplasmic vesicle. Its subcellular location is the phagosome. Its function is as follows. Plays a role in the regulation of cell morphology and cytoskeletal organization. Required in the cortical actin filament dynamics and cell shape. May play a role in the control of cell motility and survival of macrophages. This Mus musculus (Mouse) protein is Formin-like protein 1 (Fmnl1).